The primary structure comprises 274 residues: GATA transcription factor 1 (274 aa).

Disordered regions lie at residues 1-39 and 102-132; these read MEME…KTGL and SPVS…TAVA. The Nuclear localization signal motif lies at 152-159; the sequence is KARSKRRR. A GATA-type zinc finger spans residues 190–244; sequence LIMGRKCQHCGAEKTPQWRAGPAGPKTLCNACGVRYKSGRLVPEYRPANSPTFTA.

This sequence belongs to the type IV zinc-finger family. Class A subfamily. Mostly expressed in roots. Also expressed in stems, flowers and leaves.

It localises to the nucleus. Transcriptional activator that specifically binds 5'-GATA-3' or 5'-GAT-3' motifs within gene promoters. May be involved in the regulation of some light-responsive genes. This is GATA transcription factor 1 (GATA1) from Arabidopsis thaliana (Mouse-ear cress).